The primary structure comprises 240 residues: Guanine nucleotide exchange factor sopE2 (240 aa).

Residues 78 to 240 (LTSKTVKDFM…IANKYLQNAS (163 aa)) form a GEF catalytic domain region.

This sequence belongs to the GEF (guanine exchange factor) SopE family.

It localises to the secreted. In terms of biological role, activator for CDC42 by directly engaging this Rho GTPase and acting as potent guanine nucleotide exchange factor (GEF). This activation results in actin cytoskeleton rearrangements and stimulates membrane ruffling, promoting bacterial entry into non-phagocytic cells. Chaperone InvB is required for secretion, translocation and stabilization of intracellular levels of sopE2. The protein is Guanine nucleotide exchange factor sopE2 (sopE2) of Salmonella paratyphi A (strain ATCC 9150 / SARB42).